A 101-amino-acid polypeptide reads, in one-letter code: Large ribosomal subunit protein uL23 (101 aa).

This sequence belongs to the universal ribosomal protein uL23 family. Part of the 50S ribosomal subunit. Contacts protein L29, and trigger factor when it is bound to the ribosome.

In terms of biological role, one of the early assembly proteins it binds 23S rRNA. One of the proteins that surrounds the polypeptide exit tunnel on the outside of the ribosome. Forms the main docking site for trigger factor binding to the ribosome. This Thiobacillus denitrificans (strain ATCC 25259 / T1) protein is Large ribosomal subunit protein uL23.